The following is a 206-amino-acid chain: Probable thymidylate kinase (206 aa).

7-14 (GIDGSGKS) serves as a coordination point for ATP.

It belongs to the thymidylate kinase family.

It carries out the reaction dTMP + ATP = dTDP + ADP. The protein is Probable thymidylate kinase of Methanospirillum hungatei JF-1 (strain ATCC 27890 / DSM 864 / NBRC 100397 / JF-1).